The primary structure comprises 676 residues: Probable potassium transport system protein Kup (676 aa).

The next 12 membrane-spanning stretches (helical) occupy residues 14–34 (GLLI…LYVM), 56–76 (ISLI…IIAL), 97–117 (AAWL…DGTL), 142–162 (VSNQ…LFSI), 173–193 (AFGP…LINI), 219–239 (AGFA…ALYS), 252–272 (SWPF…VWIL), 296–316 (LASI…LITG), 345–365 (IYIP…VLFF), 376–396 (GLSI…WLVL), 402–422 (LANL…MGSS), and 429–449 (GGYV…VWYF).

This sequence belongs to the HAK/KUP transporter (TC 2.A.72) family.

Its subcellular location is the cell membrane. It catalyses the reaction K(+)(in) + H(+)(in) = K(+)(out) + H(+)(out). Its function is as follows. Transport of potassium into the cell. Likely operates as a K(+):H(+) symporter. This chain is Probable potassium transport system protein Kup, found in Lactobacillus delbrueckii subsp. bulgaricus (strain ATCC BAA-365 / Lb-18).